Here is a 732-residue protein sequence, read N- to C-terminus: Phosphoribosylformylglycinamidine synthase subunit PurL (732 aa).

H42 is an active-site residue. ATP contacts are provided by Y45 and K84. E86 provides a ligand contact to Mg(2+). Substrate-binding positions include 87 to 90 (SHNH) and R109. Catalysis depends on H88, which acts as the Proton acceptor. D110 serves as a coordination point for Mg(2+). Residue Q238 coordinates substrate. D266 provides a ligand contact to Mg(2+). 310 to 312 (ESQ) contributes to the substrate binding site. ATP contacts are provided by D496 and G533. Position 534 (N534) interacts with Mg(2+). S536 is a binding site for substrate.

The protein belongs to the FGAMS family. In terms of assembly, monomer. Part of the FGAM synthase complex composed of 1 PurL, 1 PurQ and 2 PurS subunits.

It is found in the cytoplasm. The enzyme catalyses N(2)-formyl-N(1)-(5-phospho-beta-D-ribosyl)glycinamide + L-glutamine + ATP + H2O = 2-formamido-N(1)-(5-O-phospho-beta-D-ribosyl)acetamidine + L-glutamate + ADP + phosphate + H(+). Its pathway is purine metabolism; IMP biosynthesis via de novo pathway; 5-amino-1-(5-phospho-D-ribosyl)imidazole from N(2)-formyl-N(1)-(5-phospho-D-ribosyl)glycinamide: step 1/2. Its function is as follows. Part of the phosphoribosylformylglycinamidine synthase complex involved in the purines biosynthetic pathway. Catalyzes the ATP-dependent conversion of formylglycinamide ribonucleotide (FGAR) and glutamine to yield formylglycinamidine ribonucleotide (FGAM) and glutamate. The FGAM synthase complex is composed of three subunits. PurQ produces an ammonia molecule by converting glutamine to glutamate. PurL transfers the ammonia molecule to FGAR to form FGAM in an ATP-dependent manner. PurS interacts with PurQ and PurL and is thought to assist in the transfer of the ammonia molecule from PurQ to PurL. In Campylobacter hominis (strain ATCC BAA-381 / DSM 21671 / CCUG 45161 / LMG 19568 / NCTC 13146 / CH001A), this protein is Phosphoribosylformylglycinamidine synthase subunit PurL.